The following is a 157-amino-acid chain: uncharacterized protein (157 aa).

An N-acetyltransferase domain is found at 9-146 (LLINYKTLDE…GDFYVWHPET (138 aa)).

This is an uncharacterized protein from Bacillus cereus (strain AH187).